The primary structure comprises 523 residues: Thiamine pathway transporter THI73 (523 aa).

At 1-79 (MKNMSQRSMD…LSPKVLRKVD (79 aa)) the chain is on the cytoplasmic side. Residues 80 to 100 (LFILPFLCCTYLLMFLDKALL) form a helical membrane-spanning segment. Residues 101–118 (NYAASMGIKDHLKGNEFS) lie on the Extracellular side of the membrane. Residues 119–139 (NLGTIFSAAYIFMEPVVTYLI) traverse the membrane as a helical segment. The Cytoplasmic portion of the chain corresponds to 140–141 (QK). Residues 142–162 (FPISKILGTFITVWGIVLACH) traverse the membrane as a helical segment. The Extracellular segment spans residues 163–176 (AACKTYASLMVVRT). Residues 177–197 (LLGLFESSSAVGCIAISGMYY) traverse the membrane as a helical segment. The Cytoplasmic segment spans residues 198 to 207 (TKSEQSARIG). A helical membrane pass occupies residues 208-228 (FWATQAGTGYIVGGLISFGFL). Over 229-239 (HYHGTAFTSWQ) the chain is Extracellular. The helical transmembrane segment at 240 to 260 (IMFLVVGLVTVAFGVLTFLYL) threads the bilayer. Over 261–312 (PDNVTNAWFLNKEEKIQVVEHIRANQTGLETKKFKKQQVKELFLHDKFTWPM) the chain is Cytoplasmic. A helical membrane pass occupies residues 313-333 (LLLTACSQISTGAIGTFSVTI). At 334–345 (TGTFGFDKYETA) the chain is on the extracellular side. A helical transmembrane segment spans residues 346-366 (LLQLPIGAITAMIILITTQML). Residues 367 to 371 (SRWGH) are Cytoplasmic-facing. The chain crosses the membrane as a helical span at residues 372–392 (ITLITTSMYIPAIIGCIVLIS). Residues 393 to 400 (LPLSHKIG) lie on the Extracellular side of the membrane. The helical transmembrane segment at 401-421 (NLFSLYLLYSGSCVITNIYIW) threads the bilayer. At 422-432 (NSCNTSGYTKR) the chain is on the cytoplasmic side. The helical transmembrane segment at 433–452 (VFRNAITMIVYNVSCIIAPQ) threads the bilayer. Over 453 to 466 (MFRAYSAPRYIPAK) the chain is Extracellular. The helical transmembrane segment at 467 to 487 (IALLVTQCVCVPLQLYIGYIC) threads the bilayer. Residues 488–523 (KKENEKRDKEQEGQERKKYQFLDLTDIENRNFRYIY) lie on the Cytoplasmic side of the membrane.

This sequence belongs to the major facilitator superfamily. Allantoate permease family.

The protein resides in the endoplasmic reticulum membrane. It localises to the cell membrane. In terms of biological role, transports either thiamine or, rather, a related metabolite involved in the thiamine biosynthesis pathway. This Saccharomyces cerevisiae (strain ATCC 204508 / S288c) (Baker's yeast) protein is Thiamine pathway transporter THI73 (THI73).